The following is a 208-amino-acid chain: GTP cyclohydrolase-2 (208 aa).

49 to 53 (RLHSE) is a GTP binding site. Zn(2+) contacts are provided by Cys54, Cys65, and Cys67. Residues Gln70, 92–94 (EGR), and Thr114 contribute to the GTP site. The active-site Proton acceptor is Asp126. Arg128 (nucleophile) is an active-site residue. The GTP site is built by Thr149 and Lys154.

Belongs to the GTP cyclohydrolase II family. Zn(2+) is required as a cofactor.

It carries out the reaction GTP + 4 H2O = 2,5-diamino-6-hydroxy-4-(5-phosphoribosylamino)-pyrimidine + formate + 2 phosphate + 3 H(+). It participates in cofactor biosynthesis; riboflavin biosynthesis; 5-amino-6-(D-ribitylamino)uracil from GTP: step 1/4. In terms of biological role, catalyzes the conversion of GTP to 2,5-diamino-6-ribosylamino-4(3H)-pyrimidinone 5'-phosphate (DARP), formate and pyrophosphate. The protein is GTP cyclohydrolase-2 of Azotobacter vinelandii (strain DJ / ATCC BAA-1303).